The chain runs to 68 residues: Lantibiotic mersacidin (68 aa).

The segment at 1-28 is disordered; that stretch reads MSQEAIIRSWKDPFSRENSTQNPAGNPF. The propeptide occupies 1 to 48; that stretch reads MSQEAIIRSWKDPFSRENSTQNPAGNPFSELKEAQMDKLVGAGDMEAA. Positions 49-50 form a cross-link, beta-methyllanthionine (Cys-Thr); that stretch reads CT. 2 consecutive cross-links (beta-methyllanthionine (Thr-Cys)) follow at residues 52-60 and 61-66; these read TLPGGGGVC and TLTSEC. A cross-link (S-(2-aminovinyl)-3-methyl-D-cysteine (Thr-Cys)) is located at residues 63–68; sequence TSECIC. Serine 64 is subject to 2,3-didehydroalanine (Ser).

It belongs to the type B lantibiotic family. Post-translationally, maturation of lantibiotics involves the enzymatic conversion of Thr, and Ser into dehydrated AA and the formation of thioether bonds with cysteine. The carboxy-terminal beta-methyllanthionine undergoes decarboxylation. This is followed by membrane translocation and cleavage of the modified precursor.

Functionally, kills a number of Gram-positive bacteria. Acts at the level of cell wall biosynthesis by interfering with bacterial peptidoglycan biosynthesis. Specifically inhibits the conversion of the lipid II intermediate into polymeric nascent glycan strands by transglycosylation. May interact with the peptidoglycan precursor rather than with the enzyme. The polypeptide is Lantibiotic mersacidin (mrsA) (Bacillus sp. (strain HIL-Y85/54728)).